Reading from the N-terminus, the 520-residue chain is 4-hydroxyphenylacetate 3-monooxygenase oxygenase component (520 aa).

FAD is bound by residues 155 to 157 (HAI) and Thr-196.

This sequence belongs to the FADH(2)-utilizing monooxygenase family. In terms of assembly, homodimer. HPA 3-hydroxylase consists of a reductase component HpaC and an oxygenase component HpaB. Some form of interactions between the reductase and the oxygenase facilitate the transfer of FADH(-) to the oxygenase in P.aeruginosa, although interactions are not required in other species.

The enzyme catalyses 4-hydroxyphenylacetate + FADH2 + O2 = 3,4-dihydroxyphenylacetate + FAD + H2O + H(+). Its pathway is aromatic compound metabolism; 4-hydroxyphenylacetate degradation; pyruvate and succinate semialdehyde from 4-hydroxyphenylacetate: step 1/7. Functionally, oxygenase component of the 4-hydroxyphenylacetate (HPA) 3-hydroxylase. Catalyzes the hydroxylation of 4-hydroxyphenylacetate to form 3,4-dihydroxyphenylacetate, using FADH(-) provided by the reductase component HpaC to activate oxygen. To a lesser extent, can also use reduced FMN. In vitro, has hydroxylation activity toward tyrosol and various cinnamic acid derivatives, catalyzing the hydroxylation of p-coumaric acid, caffeic acid, ferulic acid, and coniferaldehyde. The chain is 4-hydroxyphenylacetate 3-monooxygenase oxygenase component from Pseudomonas aeruginosa (strain ATCC 15692 / DSM 22644 / CIP 104116 / JCM 14847 / LMG 12228 / 1C / PRS 101 / PAO1).